A 178-amino-acid polypeptide reads, in one-letter code: 6,7-dimethyl-8-ribityllumazine synthase (178 aa).

5-amino-6-(D-ribitylamino)uracil is bound by residues Tyr27, 58–60 (SLE), and 82–84 (CVI). 87–88 (AT) is a (2S)-2-hydroxy-3-oxobutyl phosphate binding site. The active-site Proton donor is the His90. A 5-amino-6-(D-ribitylamino)uracil-binding site is contributed by Asn114. Arg128 contacts (2S)-2-hydroxy-3-oxobutyl phosphate.

The protein belongs to the DMRL synthase family.

It carries out the reaction (2S)-2-hydroxy-3-oxobutyl phosphate + 5-amino-6-(D-ribitylamino)uracil = 6,7-dimethyl-8-(1-D-ribityl)lumazine + phosphate + 2 H2O + H(+). The protein operates within cofactor biosynthesis; riboflavin biosynthesis; riboflavin from 2-hydroxy-3-oxobutyl phosphate and 5-amino-6-(D-ribitylamino)uracil: step 1/2. Its function is as follows. Catalyzes the formation of 6,7-dimethyl-8-ribityllumazine by condensation of 5-amino-6-(D-ribitylamino)uracil with 3,4-dihydroxy-2-butanone 4-phosphate. This is the penultimate step in the biosynthesis of riboflavin. The chain is 6,7-dimethyl-8-ribityllumazine synthase from Jannaschia sp. (strain CCS1).